The primary structure comprises 210 residues: MNLQRQAEIHRVTNETEVSVRLGLDGSGRCKVSSGIAFLDHMLHQLSSHGLLDLELVAKGDTHIDDHHTNEDVGIALGQALSKALGNRKGIYRFGQFTAPLDEALVQVILDCSGRPHINYELEIPTQKIGTYDTELVREFFVALANNSGLTLHIRQLNGSNSHHIVEACFKAFAKSLRMAIEADPRRGGSIPSSKGVLEQAGDNNTEKSK.

Residues 185-210 are disordered; it reads PRRGGSIPSSKGVLEQAGDNNTEKSK.

This sequence belongs to the imidazoleglycerol-phosphate dehydratase family.

It is found in the cytoplasm. It catalyses the reaction D-erythro-1-(imidazol-4-yl)glycerol 3-phosphate = 3-(imidazol-4-yl)-2-oxopropyl phosphate + H2O. Its pathway is amino-acid biosynthesis; L-histidine biosynthesis; L-histidine from 5-phospho-alpha-D-ribose 1-diphosphate: step 6/9. The polypeptide is Imidazoleglycerol-phosphate dehydratase (Prochlorococcus marinus (strain SARG / CCMP1375 / SS120)).